A 550-amino-acid polypeptide reads, in one-letter code: Hydroxylamine reductase (550 aa).

Residues cysteine 3, cysteine 6, cysteine 18, and cysteine 25 each contribute to the [2Fe-2S] cluster site. 8 residues coordinate hybrid [4Fe-2O-2S] cluster: histidine 249, glutamate 273, cysteine 317, cysteine 405, cysteine 433, cysteine 458, glutamate 492, and lysine 494. The residue at position 405 (cysteine 405) is a Cysteine persulfide.

The protein belongs to the HCP family. [2Fe-2S] cluster serves as cofactor. The cofactor is hybrid [4Fe-2O-2S] cluster.

The protein resides in the cytoplasm. The enzyme catalyses A + NH4(+) + H2O = hydroxylamine + AH2 + H(+). In terms of biological role, catalyzes the reduction of hydroxylamine to form NH(3) and H(2)O. The sequence is that of Hydroxylamine reductase from Salmonella gallinarum (strain 287/91 / NCTC 13346).